A 288-amino-acid chain; its full sequence is Diaminopimelate epimerase (288 aa).

Substrate-binding residues include Asn-14 and Asn-67. Residue Cys-76 is the Proton donor of the active site. Substrate-binding positions include 77–78, Asn-166, Asn-199, and 217–218; these read GN and ER. Residue Cys-226 is the Proton acceptor of the active site. Position 227 to 228 (227 to 228) interacts with substrate; it reads GT.

This sequence belongs to the diaminopimelate epimerase family. Homodimer.

The protein localises to the cytoplasm. It catalyses the reaction (2S,6S)-2,6-diaminopimelate = meso-2,6-diaminopimelate. Its pathway is amino-acid biosynthesis; L-lysine biosynthesis via DAP pathway; DL-2,6-diaminopimelate from LL-2,6-diaminopimelate: step 1/1. Catalyzes the stereoinversion of LL-2,6-diaminopimelate (L,L-DAP) to meso-diaminopimelate (meso-DAP), a precursor of L-lysine and an essential component of the bacterial peptidoglycan. The sequence is that of Diaminopimelate epimerase from Bacillus cereus (strain AH820).